The chain runs to 452 residues: Pup--protein ligase (452 aa).

Glu9 contributes to the Mg(2+) binding site. Arg53 is an ATP binding site. Residue Tyr55 coordinates Mg(2+). Asp57 (proton acceptor) is an active-site residue. Glu63 serves as a coordination point for Mg(2+). ATP is bound by residues Thr66 and Trp419.

This sequence belongs to the Pup ligase/Pup deamidase family. Pup-conjugating enzyme subfamily.

It catalyses the reaction ATP + [prokaryotic ubiquitin-like protein]-L-glutamate + [protein]-L-lysine = ADP + phosphate + N(6)-([prokaryotic ubiquitin-like protein]-gamma-L-glutamyl)-[protein]-L-lysine.. It participates in protein degradation; proteasomal Pup-dependent pathway. Its pathway is protein modification; protein pupylation. Functionally, catalyzes the covalent attachment of the prokaryotic ubiquitin-like protein modifier Pup to the proteasomal substrate proteins, thereby targeting them for proteasomal degradation. This tagging system is termed pupylation. The ligation reaction involves the side-chain carboxylate of the C-terminal glutamate of Pup and the side-chain amino group of a substrate lysine. This chain is Pup--protein ligase, found in Mycobacterium avium (strain 104).